Here is a 280-residue protein sequence, read N- to C-terminus: Phosphatidylglycerol--prolipoprotein diacylglyceryl transferase (280 aa).

3 helical membrane-spanning segments follow: residues 15 to 35 (IFSI…IFAL), 60 to 80 (FIGL…PVFF), and 90 to 110 (IWEG…VLLF). R138 provides a ligand contact to a 1,2-diacyl-sn-glycero-3-phospho-(1'-sn-glycerol). Transmembrane regions (helical) follow at residues 217–237 (MPFG…RIFL) and 257–277 (GQLL…NIYV).

It belongs to the Lgt family.

Its subcellular location is the cell membrane. The enzyme catalyses L-cysteinyl-[prolipoprotein] + a 1,2-diacyl-sn-glycero-3-phospho-(1'-sn-glycerol) = an S-1,2-diacyl-sn-glyceryl-L-cysteinyl-[prolipoprotein] + sn-glycerol 1-phosphate + H(+). The protein operates within protein modification; lipoprotein biosynthesis (diacylglyceryl transfer). Functionally, catalyzes the transfer of the diacylglyceryl group from phosphatidylglycerol to the sulfhydryl group of the N-terminal cysteine of a prolipoprotein, the first step in the formation of mature lipoproteins. In Buchnera aphidicola subsp. Baizongia pistaciae (strain Bp), this protein is Phosphatidylglycerol--prolipoprotein diacylglyceryl transferase.